Consider the following 176-residue polypeptide: RNA pyrophosphohydrolase (176 aa).

Residues 6 to 149 (GYRPNVGIII…KRNVYEMALT (144 aa)) enclose the Nudix hydrolase domain. The short motif at 38 to 59 (GGIKPGESPEAAMYRELMEEVG) is the Nudix box element.

The protein belongs to the Nudix hydrolase family. RppH subfamily. It depends on a divalent metal cation as a cofactor.

Accelerates the degradation of transcripts by removing pyrophosphate from the 5'-end of triphosphorylated RNA, leading to a more labile monophosphorylated state that can stimulate subsequent ribonuclease cleavage. The chain is RNA pyrophosphohydrolase from Laribacter hongkongensis (strain HLHK9).